A 384-amino-acid chain; its full sequence is Histone acetyltransferase type B subunit 2 (384 aa).

5 WD repeats span residues 156-196 (GHSA…SSIS), 203-243 (RHET…CIHA), 247-287 (AHTS…QPLH), 291-331 (GHSK…AEVP), and 348-384 (GHTS…PQPE).

The protein belongs to the WD repeat RBAP46/RBAP48/MSI1 family. Component of the HAT-B complex.

The protein resides in the cytoplasm. Its subcellular location is the nucleus. Regulatory subunit of the histone acetylase B (HAT-B) complex. The complex acetylates histone H4 which is required for telomeric silencing. In Encephalitozoon cuniculi (strain GB-M1) (Microsporidian parasite), this protein is Histone acetyltransferase type B subunit 2 (HAT2).